We begin with the raw amino-acid sequence, 49 residues long: uncharacterized protein (49 aa).

Residues 20-42 (LFLVGLTIGKMATSRILSFLGFI) form a helical membrane-spanning segment.

It is found in the membrane. This is an uncharacterized protein from Dictyostelium discoideum (Social amoeba).